The sequence spans 204 residues: Probable peptidyl-tRNA hydrolase (204 aa).

His-36 functions as the Proton acceptor in the catalytic mechanism. TRNA contacts are provided by Asn-86 and Asn-132.

The protein belongs to the PTH family.

The catalysed reaction is an N-acyl-L-alpha-aminoacyl-tRNA + H2O = an N-acyl-L-amino acid + a tRNA + H(+). In terms of biological role, peptidyl-tRNA hydrolase that cleaves nascent chains-tRNAs that are not stably fixed in the P-site of 60S ribosome-nascent chain complexes. Acts downstream of the ribosome-associated quality control (RQC) pathway to release non-ubiquitinated nascent chains from 60S and 80S ribosome-nascent chain complexes. Does not act on ubiquitinated nascent chains, which are cleaved by ANKZF1 for degradation. In Mus musculus (Mouse), this protein is Probable peptidyl-tRNA hydrolase.